A 162-amino-acid polypeptide reads, in one-letter code: MLAPIPEPKPGDLIEIFRPMYRHWAIYVGDGYVIHLAPPSEIAGAGAASIMSALTDKAIVKKELLCHVAGKDKYQVNNKHDEEYTPLPLSKIIQRAERLVGQEVLYRLTSENCEHFVNELRYGVPRSDQVRDAVKAVGIAGVGLAALGLVGVMLSRNKKQKQ.

Topologically, residues 1–133 (MLAPIPEPKP…VPRSDQVRDA (133 aa)) are cytoplasmic. Residues 13-129 (LIEIFRPMYR…LRYGVPRSDQ (117 aa)) form the LRAT domain. Active-site residues include H23 and H35. The active-site Acyl-thioester intermediate is C113. A helical transmembrane segment spans residues 134-154 (VKAVGIAGVGLAALGLVGVML). Residues 155–162 (SRNKKQKQ) lie on the Lumenal side of the membrane.

Belongs to the H-rev107 family. As to quaternary structure, interacts with PPP2R1A; this interaction might decrease PP2A activity. In terms of tissue distribution, ubiquitously expressed in normal tissues but down-regulated in primary carcinomas or in many cell lines derived from tumors. Highly expressed in white adipose tissue and in adipocytes. Expressed at lower levels in brown adipose tissue.

It is found in the cell membrane. It localises to the cytoplasm. Its subcellular location is the cytosol. The protein localises to the perinuclear region. The protein resides in the peroxisome membrane. It is found in the mitochondrion membrane. It localises to the nucleus envelope. Its subcellular location is the lysosome membrane. The protein localises to the endoplasmic reticulum membrane. The catalysed reaction is a 1,2-diacyl-sn-glycero-3-phosphocholine + H2O = a 1-acyl-sn-glycero-3-phosphocholine + a fatty acid + H(+). It catalyses the reaction a 1,2-diacyl-sn-glycero-3-phosphocholine + H2O = a 2-acyl-sn-glycero-3-phosphocholine + a fatty acid + H(+). It carries out the reaction 1,2-dihexadecanoyl-sn-glycero-3-phosphocholine + H2O = 1-hexadecanoyl-sn-glycero-3-phosphocholine + hexadecanoate + H(+). The enzyme catalyses 1,2-dihexadecanoyl-sn-glycero-3-phosphocholine + H2O = 2-hexadecanoyl-sn-glycero-3-phosphocholine + hexadecanoate + H(+). The catalysed reaction is 1-hexadecanoyl-2-(9Z-octadecenoyl)-sn-glycero-3-phosphocholine + H2O = 2-(9Z-octadecenoyl)-sn-glycero-3-phosphocholine + hexadecanoate + H(+). It catalyses the reaction 1-hexadecanoyl-2-(9Z-octadecenoyl)-sn-glycero-3-phosphocholine + H2O = 1-hexadecanoyl-sn-glycero-3-phosphocholine + (9Z)-octadecenoate + H(+). It carries out the reaction 1-hexadecanoyl-2-(5Z,8Z,11Z,14Z-eicosatetraenoyl)-sn-glycero-3-phosphocholine + H2O = 1-hexadecanoyl-sn-glycero-3-phosphocholine + (5Z,8Z,11Z,14Z)-eicosatetraenoate + H(+). The enzyme catalyses 1-hexadecanoyl-2-(5Z,8Z,11Z,14Z-eicosatetraenoyl)-sn-glycero-3-phosphocholine + H2O = 2-(5Z,8Z,11Z,14Z)-eicosatetraenoyl-sn-glycero-3-phosphocholine + hexadecanoate + H(+). The catalysed reaction is 1-hexadecanoyl-2-(9Z,12Z-octadecadienoyl)-sn-glycero-3-phosphoethanolamine + H2O = 1-hexadecanoyl-sn-glycero-3-phosphoethanolamine + (9Z,12Z)-octadecadienoate + H(+). It catalyses the reaction 1-hexadecanoyl-2-(9Z,12Z-octadecadienoyl)-sn-glycero-3-phosphoethanolamine + H2O = 2-(9Z,12Z)-octadecadienoyl-sn-glycero-3-phosphoethanolamine + hexadecanoate + H(+). It carries out the reaction 1-hexadecanoyl-2-(5Z,8Z,11Z,14Z-eicosatetraenoyl)-sn-glycero-3-phosphoethanolamine + H2O = 1-hexadecanoyl-sn-glycero-3-phosphoethanolamine + (5Z,8Z,11Z,14Z)-eicosatetraenoate + H(+). The enzyme catalyses 1-hexadecanoyl-2-(5Z,8Z,11Z,14Z-eicosatetraenoyl)-sn-glycero-3-phosphoethanolamine + H2O = 2-(5Z,8Z,11Z,14Z)-eicosatetraenoyl-sn-glycero-3-phosphoethanolamine + hexadecanoate + H(+). The catalysed reaction is 1-hexanoyl-2-acyl-sn-glycero-3-phosphocholine + H2O = hexanoate + a 2-acyl-sn-glycero-3-phosphocholine + H(+). It catalyses the reaction 1-hexanoyl-2-acyl-sn-glycero-3-phosphocholine + H2O = 1-hexanoyl-sn-glycero-3-phosphocholine + a fatty acid + H(+). It carries out the reaction 1,2-diheptadecanoyl-sn-glycero-3-phosphoethanolamine + 1-(9Z-octadecenoyl)-2-hexadecanoyl-sn-glycero-3-phosphocholine = 1,2-diheptadecanoyl-sn-glycero-3-phospho-N-hexadecanoyl-ethanolamine + 1-(9Z-octadecenoyl)-sn-glycero-3-phosphocholine + H(+). The enzyme catalyses 1,2-diheptadecanoyl-sn-glycero-3-phosphoethanolamine + 1-(9Z-octadecenoyl)-2-hexadecanoyl-sn-glycero-3-phosphocholine = 1,2-diheptadecanoyl-sn-glycero-3-phospho-N-(9Z-octadecenoyl)-ethanolamine + 2-hexadecanoyl-sn-glycero-3-phosphocholine + H(+). The catalysed reaction is 1,2-dihexanoyl-sn-glycero-3-phosphoethanolamine + 2-heptanoyl-sn-glycero-3-phosphocholine = hexanoyl-sn-glycero-3-phosphoethanolamine + 1-hexanoyl-2-heptanoyl-sn-glycero-3-phosphocholine. It catalyses the reaction 1-hexadecanoyl-2-octadecanoyl-sn-glycero-3-phosphocholine + H2O = octadecanoate + 1-hexadecanoyl-sn-glycero-3-phosphocholine + H(+). It carries out the reaction 1-hexadecanoyl-2-octadecanoyl-sn-glycero-3-phosphocholine + H2O = 2-octadecanoyl-sn-glycero-3-phosphocholine + hexadecanoate + H(+). The enzyme catalyses 1-octadecanoyl-2-hexadecanoyl-sn-glycero-3-phosphocholine + H2O = 1-octadecanoyl-sn-glycero-3-phosphocholine + hexadecanoate + H(+). The catalysed reaction is 1-octadecanoyl-2-hexadecanoyl-sn-glycero-3-phosphocholine + H2O = 2-hexadecanoyl-sn-glycero-3-phosphocholine + octadecanoate + H(+). It catalyses the reaction 1-hexadecanoyl-2-(9Z,12Z-octadecadienoyl)-sn-glycero-3-phosphocholine + H2O = (9Z,12Z)-octadecadienoate + 1-hexadecanoyl-sn-glycero-3-phosphocholine + H(+). It carries out the reaction 1-hexadecanoyl-2-(9Z,12Z-octadecadienoyl)-sn-glycero-3-phosphocholine + H2O = 2-(9Z,12Z-octadecadienoyl)-sn-glycero-3-phosphocholine + hexadecanoate + H(+). The enzyme catalyses 1,2-di-(9Z-octadecenoyl)-sn-glycero-3-phosphocholine + H2O = 2-(9Z-octadecenoyl)-sn-glycero-3-phosphocholine + (9Z)-octadecenoate + H(+). The catalysed reaction is 1,2-dihexadecanoyl-sn-glycero-3-phosphocholine + H2O = hexadecanoyl-sn-glycero-3-phosphocholine + hexadecanoate + H(+). It catalyses the reaction 1,2-di-(9Z-octadecenoyl)-sn-glycero-3-phosphocholine + H2O = 1-(9Z-octadecenoyl)-sn-glycero-3-phosphocholine + (9Z)-octadecenoate + H(+). It carries out the reaction 1,2-di-(9Z-octadecenoyl)-sn-glycero-3-phosphoethanolamine + 1,2-dihexadecanoyl-sn-glycero-3-phosphocholine = hexadecanoyl-sn-glycero-3-phosphocholine + N-hexadecanoyl-1,2-di-(9Z-octadecenoyl)-sn-glycero-3-phosphoethanolamine + H(+). The enzyme catalyses 1,2-di-(9Z,12Z-octadecadienoyl)-sn-glycero-3-phosphocholine + H2O = 1-(9Z,12Z)-octadecadienoyl-sn-glycero-3-phosphocholine + (9Z,12Z)-octadecadienoate + H(+). Its function is as follows. Exhibits both phospholipase A1/2 and acyltransferase activities. Shows phospholipase A1 (PLA1) and A2 (PLA2), catalyzing the calcium-independent release of fatty acids from the sn-1 or sn-2 position of glycerophospholipids. For most substrates, PLA1 activity is much higher than PLA2 activity. Shows O-acyltransferase activity, catalyzing the transfer of a fatty acyl group from glycerophospholipid to the hydroxyl group of lysophospholipid. Shows N-acyltransferase activity,catalyzing the calcium-independent transfer of a fatty acyl group at the sn-1 position of phosphatidylcholine (PC) and other glycerophospholipids to the primary amine of phosphatidylethanolamine (PE), forming N-acylphosphatidylethanolamine (NAPE), which serves as precursor for N-acylethanolamines (NAEs). Exhibits high N-acyltransferase activity and low phospholipase A1/2 activity. Required for complete organelle rupture and degradation that occur during eye lens terminal differentiation, when fiber cells that compose the lens degrade all membrane-bound organelles in order to provide lens with transparency to allow the passage of light. Organelle membrane degradation is probably catalyzed by the phospholipase activity. (Microbial infection) Acts as a host factor for picornaviruses: required during early infection to promote viral genome release into the cytoplasm. This chain is Phospholipase A and acyltransferase 3, found in Mus musculus (Mouse).